The following is a 583-amino-acid chain: L-galactono-1,4-lactone dehydrogenase 2, mitochondrial (583 aa).

The transit peptide at 1–36 (MRRLLLAGILRRASSSPSSHHHLHLVRALSASSPLP) directs the protein to the mitochondrion. The propeptide at 37 to 78 (ASDADLRKYAGYALLLLGCGAATYYSFPLPPDALHKKAVPFK) is removed in mature form. Residues 45–61 (YAGYALLLLGCGAATYY) traverse the membrane as a helical segment. Positions 95 to 266 (THEVHTRVLL…AEVTLQCVER (172 aa)) constitute an FAD-binding PCMH-type domain.

FAD serves as cofactor.

Its subcellular location is the mitochondrion membrane. The enzyme catalyses L-galactono-1,4-lactone + 4 Fe(III)-[cytochrome c] = L-dehydroascorbate + 4 Fe(II)-[cytochrome c] + 5 H(+). It functions in the pathway cofactor biosynthesis; L-ascorbate biosynthesis. Its function is as follows. Involved in the biosynthesis of ascorbic acid. This Oryza sativa subsp. japonica (Rice) protein is L-galactono-1,4-lactone dehydrogenase 2, mitochondrial (GLDH2).